A 229-amino-acid chain; its full sequence is Urease accessory protein UreF (229 aa).

It belongs to the UreF family. In terms of assembly, ureD, UreF and UreG form a complex that acts as a GTP-hydrolysis-dependent molecular chaperone, activating the urease apoprotein by helping to assemble the nickel containing metallocenter of UreC. The UreE protein probably delivers the nickel.

It localises to the cytoplasm. Its function is as follows. Required for maturation of urease via the functional incorporation of the urease nickel metallocenter. The chain is Urease accessory protein UreF from Staphylococcus epidermidis (strain ATCC 12228 / FDA PCI 1200).